The primary structure comprises 459 residues: Glycosyl hydrolase family 109 protein 1 (459 aa).

Positions 1–31 (MHNIHRRHFLKAAGAVTAGLVTANIALNANA) form a signal peptide, tat-type signal. Residues 64 to 65 (ER), aspartate 86, 135 to 138 (WEWH), 155 to 156 (EV), and asparagine 184 each bind NAD(+). Substrate contacts are provided by residues tyrosine 213, arginine 232, 244–247 (YPTH), and tyrosine 326. Tyrosine 244 is a binding site for NAD(+).

It belongs to the Gfo/Idh/MocA family. Glycosyl hydrolase 109 subfamily. It depends on NAD(+) as a cofactor. Predicted to be exported by the Tat system. The position of the signal peptide cleavage has not been experimentally proven.

Its function is as follows. Glycosidase. The sequence is that of Glycosyl hydrolase family 109 protein 1 from Shewanella sp. (strain ANA-3).